Here is a 167-residue protein sequence, read N- to C-terminus: Translationally-controlled tumor protein homolog (167 aa).

The TCTP domain occupies methionine 1–isoleucine 167.

The protein belongs to the TCTP family.

Its subcellular location is the cytoplasm. It is found in the cytoskeleton. Involved in protein synthesis. Involved in microtubule stabilization. The polypeptide is Translationally-controlled tumor protein homolog (Kluyveromyces lactis (strain ATCC 8585 / CBS 2359 / DSM 70799 / NBRC 1267 / NRRL Y-1140 / WM37) (Yeast)).